The primary structure comprises 345 residues: Neuropeptide receptor 15 (345 aa).

Residues 1–11 lie on the Extracellular side of the membrane; that stretch reads MSVAVGIPYVC. A helical membrane pass occupies residues 12–32; that stretch reads FFIILSVVGIIGNVIVIYAIA. The Cytoplasmic segment spans residues 33–40; the sequence is GDRNMRKS. A helical membrane pass occupies residues 41-61; that stretch reads VMNILLLNLAVADLANLIFTI. The Extracellular segment spans residues 62 to 90; sequence PEWIPPVFFGSTDWLFPSFLCPVCRYLEC. A disulfide bridge connects residues cysteine 82 and cysteine 171. Residues 91–111 form a helical membrane-spanning segment; it reads VFLFASISTQMIVCIERYIAI. The Cytoplasmic segment spans residues 112–125; that stretch reads VLPMQARQLCSRRN. Residues 126-146 form a helical membrane-spanning segment; that stretch reads VLITVLVDWIFVACFASPYAV. Residues 147-187 are Extracellular-facing; that stretch reads WHSVKTKDRNTNSLRFKLFQLSATCSNTVGKSTWWQGYKLT. The chain crosses the membrane as a helical span at residues 188–208; sequence EFLAFYFVPCFIITVVYTKVA. Topologically, residues 209-246 are cytoplasmic; that stretch reads KCLWCKDPTLQCETRSCLDNKSSSRSSDALRTRRNVVK. Residues 247-267 traverse the membrane as a helical segment; sequence MLIACVAVYFVCYSPIQVIFL. At 268-281 the chain is on the extracellular side; it reads SKAVLNVTIHPPYD. A helical transmembrane segment spans residues 282–304; sequence FILLMNALAMTCSASNPLLYTLF. At 305–345 the chain is on the cytoplasmic side; sequence SQKFRRRLRDVLYCPSDVENETKTYYSINNTSIVGPRASFN.

The protein belongs to the G-protein coupled receptor 1 family. As to expression, expressed in pharyngeal muscle and AWC, ASG, ASE, ASI, and ASJ sensory neurons. Expressed in ASI neuron. Expressed in AFD neurons and in AVK interneuron.

It is found in the cell membrane. In terms of biological role, probable receptor for neuropeptide ligand nlp-8 that plays a role in octopamine signaling and specifically, the octopamine inhibition of aversion responses in olfactory sensory neurons. Plays a crucial role in daf-7 expression. Acts in concert with gpa-4 to activate TGF-beta-like daf-7 secretion in the ASI neuron, thereby promoting larval development and inhibition of dauer diapause. Suppresses immune response against pathogenic infection by inhibiting transcription regulators elt-2 and hlh-30 in ASJ neuron. Promotes pathogen avoidance behavior via intestinal gon-2, independent of aerotaxis. The protein is Neuropeptide receptor 15 (npr-15) of Caenorhabditis elegans.